Reading from the N-terminus, the 88-residue chain is Small ribosomal subunit protein uS19 (88 aa).

Belongs to the universal ribosomal protein uS19 family.

Its function is as follows. Protein S19 forms a complex with S13 that binds strongly to the 16S ribosomal RNA. This chain is Small ribosomal subunit protein uS19, found in Mycoplasma mycoides subsp. mycoides SC (strain CCUG 32753 / NCTC 10114 / PG1).